The following is a 66-amino-acid chain: MPKLKTKSGAKKRFKLTATGKLKAGVAGKRHRLIGHNGKYIRQNRGTKVMSEADAKIIRTYLPYGL.

Belongs to the bacterial ribosomal protein bL35 family.

This is Large ribosomal subunit protein bL35 from Caulobacter vibrioides (strain ATCC 19089 / CIP 103742 / CB 15) (Caulobacter crescentus).